Consider the following 225-residue polypeptide: Orotate phosphoribosyltransferase (225 aa).

K31 contacts 5-phospho-alpha-D-ribose 1-diphosphate. 39-40 (FF) lines the orotate pocket. Residues 78–79 (YK), R105, K106, K109, H111, and 130–138 (DDVLTSGKA) each bind 5-phospho-alpha-D-ribose 1-diphosphate. 2 residues coordinate orotate: T134 and R163.

It belongs to the purine/pyrimidine phosphoribosyltransferase family. PyrE subfamily. As to quaternary structure, homodimer.

The enzyme catalyses orotidine 5'-phosphate + diphosphate = orotate + 5-phospho-alpha-D-ribose 1-diphosphate. Its pathway is pyrimidine metabolism; UMP biosynthesis via de novo pathway; UMP from orotate: step 1/2. Functionally, catalyzes the transfer of a ribosyl phosphate group from 5-phosphoribose 1-diphosphate to orotate, leading to the formation of orotidine monophosphate (OMP). The chain is Orotate phosphoribosyltransferase (URA5) from Cryptococcus neoformans var. grubii serotype A (strain H99 / ATCC 208821 / CBS 10515 / FGSC 9487) (Filobasidiella neoformans var. grubii).